A 673-amino-acid chain; its full sequence is Exoribonuclease 2 (673 aa).

The 326-residue stretch at 191–516 (RTDLTATPFF…NHRLLKAVIA (326 aa)) folds into the RNB domain. An S1 motif domain is found at 562-645 (DKVFNAEIID…ETRSLIAKPA (84 aa)). The tract at residues 650–673 (PGPAPVAPTSEADATPADEAPKAE) is disordered.

It belongs to the RNR ribonuclease family. RNase II subfamily.

The protein resides in the cytoplasm. The enzyme catalyses Exonucleolytic cleavage in the 3'- to 5'-direction to yield nucleoside 5'-phosphates.. In terms of biological role, involved in mRNA degradation. Hydrolyzes single-stranded polyribonucleotides processively in the 3' to 5' direction. The chain is Exoribonuclease 2 from Aeromonas hydrophila subsp. hydrophila (strain ATCC 7966 / DSM 30187 / BCRC 13018 / CCUG 14551 / JCM 1027 / KCTC 2358 / NCIMB 9240 / NCTC 8049).